Reading from the N-terminus, the 361-residue chain is Peptide chain release factor 1 (361 aa).

Position 236 is an N5-methylglutamine (Q236).

This sequence belongs to the prokaryotic/mitochondrial release factor family. In terms of processing, methylated by PrmC. Methylation increases the termination efficiency of RF1.

The protein resides in the cytoplasm. Peptide chain release factor 1 directs the termination of translation in response to the peptide chain termination codons UAG and UAA. This is Peptide chain release factor 1 from Lactobacillus acidophilus (strain ATCC 700396 / NCK56 / N2 / NCFM).